A 2684-amino-acid polypeptide reads, in one-letter code: Probable polyketide synthase 27 (2684 aa).

In terms of domain architecture, Ketosynthase family 3 (KS3) spans 11 to 442 (CGDVAIIGIG…GSNVCLILSE (432 aa)). Active-site for beta-ketoacyl synthase activity residues include Cys-183, His-322, and His-365. The acyl/malonyl transferases stretch occupies residues 650 to 683 (GVSADIIVGHSLGEMSSSYSSGMIDFETLCYLIY). Ser-660 functions as the For acyl/malonyl transferase activity in the catalytic mechanism. The segment at 958–1087 (HEKITSEGPP…GNFSLFKHNS (130 aa)) is N-terminal hotdog fold. Positions 958-1276 (HEKITSEGPP…CTSVSLVNPR (319 aa)) constitute a PKS/mFAS DH domain. His-999 serves as the catalytic Proton acceptor; for dehydratase activity. Residues 1104 to 1276 (NFTTISKQEF…CTSVSLVNPR (173 aa)) are C-terminal hotdog fold. The active-site Proton donor; for dehydratase activity is the Asp-1173. The interval 1202-1221 (IPSSSSSSKDDNDCDSNNNN) is disordered. The Carrier domain maps to 2585–2662 (SDNEFIHSTI…QSIDIIKFGY (78 aa)). Residue Ser-2622 is modified to O-(pantetheine 4'-phosphoryl)serine.

It depends on pantetheine 4'-phosphate as a cofactor.

Probable polyketide synthase. The protein is Probable polyketide synthase 27 (pks27) of Dictyostelium discoideum (Social amoeba).